A 129-amino-acid polypeptide reads, in one-letter code: Small ribosomal subunit protein uS11 (129 aa).

The protein belongs to the universal ribosomal protein uS11 family. Part of the 30S ribosomal subunit. Interacts with proteins S7 and S18. Binds to IF-3.

Its function is as follows. Located on the platform of the 30S subunit, it bridges several disparate RNA helices of the 16S rRNA. Forms part of the Shine-Dalgarno cleft in the 70S ribosome. The chain is Small ribosomal subunit protein uS11 from Caulobacter vibrioides (strain ATCC 19089 / CIP 103742 / CB 15) (Caulobacter crescentus).